The chain runs to 212 residues: Pyridoxine/pyridoxamine 5'-phosphate oxidase (212 aa).

FMN is bound by residues 59 to 64 (RMVLMK), 74 to 75 (YS), lysine 81, and glutamine 103. Residue lysine 64 coordinates substrate. 2 residues coordinate substrate: tyrosine 121 and arginine 125. Residues 138-139 (QS) and tryptophan 183 contribute to the FMN site. 189 to 191 (RLH) is a binding site for substrate. Arginine 193 is an FMN binding site.

The protein belongs to the pyridoxamine 5'-phosphate oxidase family. Homodimer. Requires FMN as cofactor.

The catalysed reaction is pyridoxamine 5'-phosphate + O2 + H2O = pyridoxal 5'-phosphate + H2O2 + NH4(+). The enzyme catalyses pyridoxine 5'-phosphate + O2 = pyridoxal 5'-phosphate + H2O2. It participates in cofactor metabolism; pyridoxal 5'-phosphate salvage; pyridoxal 5'-phosphate from pyridoxamine 5'-phosphate: step 1/1. The protein operates within cofactor metabolism; pyridoxal 5'-phosphate salvage; pyridoxal 5'-phosphate from pyridoxine 5'-phosphate: step 1/1. Its function is as follows. Catalyzes the oxidation of either pyridoxine 5'-phosphate (PNP) or pyridoxamine 5'-phosphate (PMP) into pyridoxal 5'-phosphate (PLP). This chain is Pyridoxine/pyridoxamine 5'-phosphate oxidase, found in Rhodopseudomonas palustris (strain TIE-1).